The chain runs to 396 residues: Serine/threonine-protein kinase VRK1 (396 aa).

In terms of domain architecture, Protein kinase spans 37–317 (WKLGSPIGQG…LLDYVEKPLY (281 aa)). ATP-binding positions include 43–51 (IGQGGFGCI) and Lys71. A Glycyl lysine isopeptide (Lys-Gly) (interchain with G-Cter in SUMO2) cross-link involves residue Lys71. The active-site Proton acceptor is the Asp177. The interval 352–396 (KPVAKKRKKEAEESVESSVEDMECSDKQTEEATQTRSKTRKRVQK) is disordered. The segment covering 364 to 374 (ESVESSVEDME) has biased composition (acidic residues). Ser376 carries the post-translational modification Phosphoserine. A required for interaction with the nucleosome region spans residues 387 to 393 (RSKTRKR).

This sequence belongs to the protein kinase superfamily. CK1 Ser/Thr protein kinase family. VRK subfamily. In terms of assembly, interacts with HDAC1, KAT2B, SETDB1, KDM3A and KDM4A. Associates with the nucleosome through interactions with nucleosome DNA, histone H2A and histone H2B; the interaction with H2A and H2B is mediated by the nucleosome acidic patch, a cluster of negatively charged residues of H2A and H2B forming a cleft within the nucleosome core. Autophosphorylated at various serine and threonine residues. Autophosphorylation does not impair its ability to phosphorylate p53/TP53. Phosphorylation by PLK3 leads to induction of Golgi fragmentation during mitosis.

It localises to the nucleus. It is found in the cytoplasm. The protein localises to the cajal body. The catalysed reaction is L-seryl-[protein] + ATP = O-phospho-L-seryl-[protein] + ADP + H(+). It carries out the reaction L-threonyl-[protein] + ATP = O-phospho-L-threonyl-[protein] + ADP + H(+). Active in presence of Mn(2+), Mg(2+) and Zn(2+), but is not functional with Ca(2+) or Cu(2+). Has a higher affinity for Mn(2+) than for Mg(2+). RAN inhibits its autophosphorylation and its ability to phosphorylate histone H3. Its function is as follows. Serine/threonine kinase involved in the regulation of key cellular processes including the cell cycle, nuclear condensation, transcription regulation, and DNA damage response. Controls chromatin organization and remodeling by mediating phosphorylation of histone H3 on 'Thr-4' and histone H2AX (H2aXT4ph). It also phosphorylates KAT5 in response to DNA damage, promoting KAT5 association with chromatin and histone acetyltransferase activity. Is involved in the regulation of cell cycle progression of neural progenitors, and is required for proper cortical neuronal migration. Is involved in neurite elongation and branching in motor neurons, and has an essential role in Cajal bodies assembly, acting through COIL phosphorylation and the control of coilin degradation. Involved in Golgi disassembly during the cell cycle: following phosphorylation by PLK3 during mitosis, it is required to induce Golgi fragmentation. Phosphorylates BANF1: disrupts its ability to bind DNA, reduces its binding to LEM domain-containing proteins and causes its relocalization from the nucleus to the cytoplasm. Phosphorylates TP53BP1 and p53/TP53 on 'Thr-18', preventing the interaction between p53/TP53 and MDM2. Phosphorylates ATF2 which activates its transcriptional activity. Phosphorylates JUN. This chain is Serine/threonine-protein kinase VRK1 (VRK1), found in Bos taurus (Bovine).